The chain runs to 138 residues: Large ribosomal subunit protein uL16 (138 aa).

Residues 1–13 (MLQPARRKYRKEQ) show a composition bias toward basic residues. The tract at residues 1-20 (MLQPARRKYRKEQKGRNTGV) is disordered.

It belongs to the universal ribosomal protein uL16 family. In terms of assembly, part of the 50S ribosomal subunit.

Its function is as follows. Binds 23S rRNA and is also seen to make contacts with the A and possibly P site tRNAs. This chain is Large ribosomal subunit protein uL16, found in Verminephrobacter eiseniae (strain EF01-2).